A 499-amino-acid polypeptide reads, in one-letter code: Glycerol kinase (499 aa).

Thr12 contributes to the ADP binding site. 3 residues coordinate ATP: Thr12, Thr13, and Ser14. Thr12 lines the sn-glycerol 3-phosphate pocket. Arg16 is a binding site for ADP. Residues Arg82, Glu83, Tyr135, and Asp245 each coordinate sn-glycerol 3-phosphate. Residues Arg82, Glu83, Tyr135, Asp245, and Gln246 each contribute to the glycerol site. Residues Thr267 and Gly310 each coordinate ADP. The ATP site is built by Thr267, Gly310, Gln314, and Gly411. ADP-binding residues include Gly411 and Asn415.

The protein belongs to the FGGY kinase family. As to quaternary structure, homotetramer and homodimer (in equilibrium).

It carries out the reaction glycerol + ATP = sn-glycerol 3-phosphate + ADP + H(+). It participates in polyol metabolism; glycerol degradation via glycerol kinase pathway; sn-glycerol 3-phosphate from glycerol: step 1/1. With respect to regulation, activated by phosphorylation and inhibited by fructose 1,6-bisphosphate (FBP). Its function is as follows. Key enzyme in the regulation of glycerol uptake and metabolism. Catalyzes the phosphorylation of glycerol to yield sn-glycerol 3-phosphate. The sequence is that of Glycerol kinase from Clostridium beijerinckii (strain ATCC 51743 / NCIMB 8052) (Clostridium acetobutylicum).